Reading from the N-terminus, the 167-residue chain is NADH-quinone oxidoreductase subunit B 1 (167 aa).

Cysteine 38, cysteine 39, cysteine 104, and cysteine 133 together coordinate [4Fe-4S] cluster.

The protein belongs to the complex I 20 kDa subunit family. NDH-1 is composed of 14 different subunits. Subunits NuoB, C, D, E, F, and G constitute the peripheral sector of the complex. The cofactor is [4Fe-4S] cluster.

It is found in the cell membrane. The catalysed reaction is a quinone + NADH + 5 H(+)(in) = a quinol + NAD(+) + 4 H(+)(out). Functionally, NDH-1 shuttles electrons from NADH, via FMN and iron-sulfur (Fe-S) centers, to quinones in the respiratory chain. The immediate electron acceptor for the enzyme in this species is believed to be ubiquinone. Couples the redox reaction to proton translocation (for every two electrons transferred, four hydrogen ions are translocated across the cytoplasmic membrane), and thus conserves the redox energy in a proton gradient. This Roseiflexus castenholzii (strain DSM 13941 / HLO8) protein is NADH-quinone oxidoreductase subunit B 1.